A 522-amino-acid chain; its full sequence is Sensory neuron membrane protein 2 (522 aa).

The Cytoplasmic portion of the chain corresponds to 1-7; sequence MLGKHTK. Residues 8 to 28 form a helical membrane-spanning segment; it reads LFFGVSLVALIVSVILAAWGF. Topologically, residues 29 to 469 are extracellular; the sequence is PKIVSKQIQK…QSHTLLGYVE (441 aa). Asn-44, Asn-67, Asn-104, Asn-166, Asn-191, Asn-228, Asn-272, Asn-314, and Asn-343 each carry an N-linked (GlcNAc...) asparagine glycan. 3 disulfide bridges follow: Cys-268-Cys-338, Cys-299-Cys-362, and Cys-340-Cys-351. A helical membrane pass occupies residues 470-490; the sequence is AVRWALLAIAIVATAISAIAV. The Cytoplasmic segment spans residues 491-522; it reads ARSGLIPVWPRNANSVSFILSPHPNSDVNKVH.

The protein belongs to the CD36 family. Detected in both male and female antennal tissues. Expression is two to three fold higher in male compared to female antenna. Detected at low levels in all body tissues except the female abdomen.

Its subcellular location is the cell membrane. In terms of biological role, plays an olfactory role that is not restricted to pheromone sensitivity. This chain is Sensory neuron membrane protein 2, found in Ostrinia furnacalis (Asian corn borer).